Consider the following 437-residue polypeptide: Probable N-acetylmuramidase (437 aa).

An N-terminal signal peptide occupies residues 1–57; the sequence is MPVSRVKVKNRHLKKKTKKPLAFYKPTTKFVGAVLIAGTLTTTHELLLQQTSPMVQA. 3 disordered regions span residues 217-244, 291-319, and 367-392; these read SSAG…SSTT, SSTN…ASQT, and ATSN…NSNA. The region spanning 243–286 is the LysM 1 domain; the sequence is TTYTVKSGDTLWGISQRYGISVAQIQSANNLKSTIIYIGQKLLL. Residues 291-317 show a composition bias toward low complexity; it reads SSTNSGGSNNSASTTPTTSVTPAKPAS. One can recognise a LysM 2 domain in the interval 319–362; it reads TSVKVKSGDTLWALSVKYKTSIAQLKSWNHLSSDTIYIGQNLIV. One can recognise a LysM 3 domain in the interval 393–436; that stretch reads SIHKVVKGDTLWGLSQKSGSPIASIKAWNHLSSDTILIGQYLRI.

The protein belongs to the glycosyl hydrolase 73 family.

It is found in the secreted. The enzyme catalyses Hydrolysis of (1-&gt;4)-beta-linkages between N-acetylmuramic acid and N-acetyl-D-glucosamine residues in a peptidoglycan and between N-acetyl-D-glucosamine residues in chitodextrins.. Functionally, hydrolyzes the cell wall of L.lactis and M.lysodeikticus. Required for cell separation during growth. This chain is Probable N-acetylmuramidase (acmA), found in Lactococcus lactis subsp. cremoris (Streptococcus cremoris).